We begin with the raw amino-acid sequence, 362 residues long: 3-dehydroquinate synthase (362 aa).

NAD(+)-binding positions include 71-76, 105-109, 129-130, Lys142, Lys151, and 169-172; these read DGEQYK, GVVGD, TT, and CLKT. Residues Glu184, His247, and His264 each contribute to the Zn(2+) site.

Belongs to the sugar phosphate cyclases superfamily. Dehydroquinate synthase family. Co(2+) serves as cofactor. It depends on Zn(2+) as a cofactor. NAD(+) is required as a cofactor.

Its subcellular location is the cytoplasm. The enzyme catalyses 7-phospho-2-dehydro-3-deoxy-D-arabino-heptonate = 3-dehydroquinate + phosphate. It participates in metabolic intermediate biosynthesis; chorismate biosynthesis; chorismate from D-erythrose 4-phosphate and phosphoenolpyruvate: step 2/7. Its function is as follows. Catalyzes the conversion of 3-deoxy-D-arabino-heptulosonate 7-phosphate (DAHP) to dehydroquinate (DHQ). The sequence is that of 3-dehydroquinate synthase from Escherichia coli O127:H6 (strain E2348/69 / EPEC).